The sequence spans 329 residues: Acetyl-coenzyme A carboxylase carboxyl transferase subunit alpha (329 aa).

Residues 40-294 enclose the CoA carboxyltransferase C-terminal domain; sequence QLESLAARRR…RAALERHLGE (255 aa).

The protein belongs to the AccA family. As to quaternary structure, acetyl-CoA carboxylase is a heterohexamer composed of biotin carboxyl carrier protein (AccB), biotin carboxylase (AccC) and two subunits each of ACCase subunit alpha (AccA) and ACCase subunit beta (AccD).

The protein resides in the cytoplasm. The catalysed reaction is N(6)-carboxybiotinyl-L-lysyl-[protein] + acetyl-CoA = N(6)-biotinyl-L-lysyl-[protein] + malonyl-CoA. It functions in the pathway lipid metabolism; malonyl-CoA biosynthesis; malonyl-CoA from acetyl-CoA: step 1/1. Component of the acetyl coenzyme A carboxylase (ACC) complex. First, biotin carboxylase catalyzes the carboxylation of biotin on its carrier protein (BCCP) and then the CO(2) group is transferred by the carboxyltransferase to acetyl-CoA to form malonyl-CoA. The polypeptide is Acetyl-coenzyme A carboxylase carboxyl transferase subunit alpha (Parasynechococcus marenigrum (strain WH8102)).